The following is a 623-amino-acid chain: Transketolase (623 aa).

Methionine 1 is modified (N-acetylmethionine). N6-acetyllysine is present on residues lysine 6 and lysine 11. Histidine 37 is a substrate binding site. Thiamine diphosphate contacts are provided by serine 40 and histidine 77. Residue serine 104 is modified to Phosphoserine. 123–125 (GSL) is a thiamine diphosphate binding site. Lysine 144 carries the post-translational modification N6-acetyllysine. Aspartate 155 is a Mg(2+) binding site. Thiamine diphosphate is bound by residues glycine 156 and asparagine 185. The Mg(2+) site is built by asparagine 185 and leucine 187. An N6-acetyllysine mark is found at lysine 204, lysine 232, and lysine 241. Residues lysine 244 and histidine 258 each coordinate thiamine diphosphate. Position 258 (histidine 258) interacts with substrate. Position 260 is an N6-acetyllysine (lysine 260). Tyrosine 275 bears the Phosphotyrosine mark. At threonine 287 the chain carries Phosphothreonine. Serine 295 is subject to Phosphoserine. 2 residues coordinate substrate: arginine 318 and serine 345. The residue at position 345 (serine 345) is a Phosphoserine. Lysine 352 is covalently cross-linked (Glycyl lysine isopeptide (Lys-Gly) (interchain with G-Cter in SUMO2)). The active-site Proton donor is the glutamate 366. Phenylalanine 392 serves as a coordination point for thiamine diphosphate. Substrate-binding residues include histidine 416 and aspartate 424. Glutamine 428 is a thiamine diphosphate binding site. Residue arginine 474 participates in substrate binding. An N6-acetyllysine mark is found at lysine 538 and lysine 603.

This sequence belongs to the transketolase family. Homodimer. The cofactor is Mg(2+). Ca(2+) is required as a cofactor. Requires Mn(2+) as cofactor. It depends on Co(2+) as a cofactor. Thiamine diphosphate serves as cofactor.

The enzyme catalyses D-sedoheptulose 7-phosphate + D-glyceraldehyde 3-phosphate = aldehydo-D-ribose 5-phosphate + D-xylulose 5-phosphate. Functionally, catalyzes the transfer of a two-carbon ketol group from a ketose donor to an aldose acceptor, via a covalent intermediate with the cofactor thiamine pyrophosphate. The protein is Transketolase (Tkt) of Rattus norvegicus (Rat).